The primary structure comprises 211 residues: LexA repressor (211 aa).

The segment at residues 27 to 47 (QTEIARAFGFKGVRAAQYHLE) is a DNA-binding region (H-T-H motif). Active-site for autocatalytic cleavage activity residues include Ser131 and Lys168.

It belongs to the peptidase S24 family. In terms of assembly, homodimer.

It catalyses the reaction Hydrolysis of Ala-|-Gly bond in repressor LexA.. In terms of biological role, represses a number of genes involved in the response to DNA damage (SOS response), including recA and lexA. In the presence of single-stranded DNA, RecA interacts with LexA causing an autocatalytic cleavage which disrupts the DNA-binding part of LexA, leading to derepression of the SOS regulon and eventually DNA repair. The polypeptide is LexA repressor (Stenotrophomonas maltophilia (strain R551-3)).